The following is a 525-amino-acid chain: Probable protein kinase UbiB (525 aa).

Positions 119–501 (RFDHHPVASA…QRRTNRLLSA (383 aa)) constitute a Protein kinase domain. ATP is bound by residues 125–133 (VASASIAQV) and Lys151. The Proton acceptor role is filled by Asp286. A helical transmembrane segment spans residues 502-522 (ALLFIGGFAVGIIATHVLAWL).

This sequence belongs to the ABC1 family. UbiB subfamily.

It localises to the cell inner membrane. It functions in the pathway cofactor biosynthesis; ubiquinone biosynthesis [regulation]. Is probably a protein kinase regulator of UbiI activity which is involved in aerobic coenzyme Q (ubiquinone) biosynthesis. The polypeptide is Probable protein kinase UbiB (Ralstonia nicotianae (strain ATCC BAA-1114 / GMI1000) (Ralstonia solanacearum)).